The primary structure comprises 461 residues: Elongation factor 1-alpha (461 aa).

Gly2 is subject to N,N,N-trimethylglycine. An N6,N6-dimethyllysine; alternate modification is found at Lys3. The residue at position 3 (Lys3) is an N6-methyllysine; alternate. Positions 6–241 (KTHINVVVIG…DSIEPPKRPT (236 aa)) constitute a tr-type G domain. Residues 15–22 (GHVDSGKS) are G1. 15 to 22 (GHVDSGKS) contacts GTP. The residue at position 31 (Lys31) is an N6-methyllysine. Positions 71–75 (GITID) are G2. Lys80 carries the N6,N6,N6-trimethyllysine modification. The segment at 92–95 (DAPG) is G3. GTP-binding positions include 92–96 (DAPGH) and 154–157 (NKMD). Residues 154-157 (NKMD) are G4. Residues 193–195 (SGF) form a G5 region. N6,N6-dimethyllysine; alternate is present on Lys317. An N6-methyllysine; alternate modification is found at Lys317. At Lys391 the chain carries N6-methyllysine.

Belongs to the TRAFAC class translation factor GTPase superfamily. Classic translation factor GTPase family. EF-Tu/EF-1A subfamily.

It localises to the cytoplasm. This protein promotes the GTP-dependent binding of aminoacyl-tRNA to the A-site of ribosomes during protein biosynthesis. In Pseudoechria curvicolla (Podospora curvicolla), this protein is Elongation factor 1-alpha (TEF).